The primary structure comprises 562 residues: Abrin-c (562 aa).

A signal peptide spans 1–34 (MDKTLKLLILCLAWTCSFSALRCAARTYPPVATN). Pyrrolidone carboxylic acid is present on Gln-35. Glu-198 is a catalytic residue. Asn-234 is a glycosylation site (N-linked (GlcNAc...) asparagine). Intrachain disulfides connect Cys-281/Cys-303, Cys-320/Cys-339, and Cys-363/Cys-380. The Ricin B-type lectin 1 domain occupies 307 to 434 (YEPTVRIGGR…YLMRQGWRTG (128 aa)). The 1-alpha repeat unit spans residues 317 to 359 (DGMCVDVYDDGYHNGNRIIAWKCKDRLEENQLWTLKSDKTIRS). Residues 360 to 400 (NGKCLTTEGYAPGNYVMIYDCTSAVAEATYWEIWDNGTIIN) form a 1-beta repeat. 2 N-linked (GlcNAc...) asparagine glycosylation sites follow: Asn-395 and Asn-435. The 1-gamma repeat unit spans residues 403 to 435 (SALVLSAESSSMGGTLTVQTNEYLMRQGWRTGN). One can recognise a Ricin B-type lectin 2 domain in the interval 437–561 (TSPFVTSISG…GKPNQIWLTL (125 aa)). A 2-alpha repeat occupies 448–483 (SDLCMQAQGSNVWLADCDNNKKEQQWALYTDGSIRS). 2 cysteine pairs are disulfide-bonded: Cys-451–Cys-464 and Cys-490–Cys-507. The 2-beta repeat unit spans residues 487–526 (TNNCLTSKDHKQGSPIVLMACSNGWASQRWLFKNDGSIYN). One copy of the 2-gamma repeat lies at 529-562 (DDMVMDVKRSDPSLKEIILHPYHGKPNQIWLTLF).

In the N-terminal section; belongs to the ribosome-inactivating protein family. Type 2 RIP subfamily. In terms of assembly, disulfide-linked dimer of A and B chains.

It carries out the reaction Endohydrolysis of the N-glycosidic bond at one specific adenosine on the 28S rRNA.. Its function is as follows. The A chain is responsible for inhibiting protein synthesis through the catalytic inactivation of 60S ribosomal subunits by removing adenine from position 4,324 of 28S rRNA. Abrin-a is more toxic than ricin. In terms of biological role, the B chain is a galactose-specific lectin that facilitates the binding of abrin to the cell membrane that precedes endocytosis. This is Abrin-c from Abrus precatorius (Indian licorice).